Here is a 101-residue protein sequence, read N- to C-terminus: UPF0235 protein CJA_0091 (101 aa).

The protein belongs to the UPF0235 family.

This chain is UPF0235 protein CJA_0091, found in Cellvibrio japonicus (strain Ueda107) (Pseudomonas fluorescens subsp. cellulosa).